A 161-amino-acid chain; its full sequence is Lectin-like protein EP153R (161 aa).

At 1–30 (MFSNKKYIGLIDKYCEKKILDDSSTIKICY) the chain is on the cytoplasmic side. A helical membrane pass occupies residues 31-51 (ILIGILIGTNMITLIYNFIFW). At 52–161 (ENYITCNQKD…HVSLLYICSK (110 aa)) the chain is on the extracellular side. An intrachain disulfide couples C66 to C77. Residues 66 to 160 (CPKDWVGYNN…KHVSLLYICS (95 aa)) form a lectin-like region. N89, N98, N104, N110, N116, N130, and N136 each carry an N-linked (GlcNAc...) asparagine; by host glycan. An intrachain disulfide couples C94 to C159.

The protein belongs to the asfivirus lectin-like protein family. In terms of assembly, homodimer.

The protein localises to the host endoplasmic reticulum membrane. In terms of biological role, down-regulates MHC-I expression by impairing the appropriate configuration or presentation into the plasma membrane of the latter. Participates in viral hemadsorption, which may help viral spread. Reduces the transactivating activity of host TP53, thus inhibiting apoptosis. Non-essential for virus growth in swine macrophage cell cultures. The sequence is that of Lectin-like protein EP153R from African swine fever virus (isolate Tick/Malawi/Lil 20-1/1983) (ASFV).